The chain runs to 629 residues: (-)-alpha-pinene synthase, chloroplastic (629 aa).

A chloroplast-targeting transit peptide spans 1-48 (MSPVSVISLPSDLCLPTSFIDRSGRELIPLHITIPNVAMRRQGKLMTR). The Mg(2+) site is built by Asp380, Asp384, and Asp532. Positions 380-384 (DDMYD) match the DDXXD motif motif. Residue Ser540 coordinates K(+).

This sequence belongs to the terpene synthase family. Tpsd subfamily. It depends on Mg(2+) as a cofactor. Mn(2+) is required as a cofactor. The cofactor is K(+).

The protein resides in the plastid. The protein localises to the chloroplast. It catalyses the reaction (2E)-geranyl diphosphate = (1S,5S)-alpha-pinene + diphosphate. Its pathway is terpene metabolism; oleoresin biosynthesis. Involved in defensive oleoresin formation in conifers in response to insect attack or other injury. Involved in monoterpene (C10) olefins biosynthesis. Produces mainly (-)-alpha-pinene (79%) and lesser amounts of (-)-beta-pinene (4.2%), nearly racemic mixtures of camphene (2.8% (+)/2.2% (-)) and limonene (2.4% (+)/3.7% (-)), as well as small amounts of (+)-alpha-pinene (3.3%) and (+)-beta-pinene (2.4%). The chain is (-)-alpha-pinene synthase, chloroplastic (PT1) from Pinus taeda (Loblolly pine).